The chain runs to 70 residues: Large ribosomal subunit protein bL31 (70 aa).

Zn(2+) contacts are provided by cysteine 16, cysteine 18, cysteine 37, and cysteine 40.

It belongs to the bacterial ribosomal protein bL31 family. Type A subfamily. As to quaternary structure, part of the 50S ribosomal subunit. Zn(2+) serves as cofactor.

Its function is as follows. Binds the 23S rRNA. In Salmonella agona (strain SL483), this protein is Large ribosomal subunit protein bL31.